Reading from the N-terminus, the 223-residue chain is Sigma non-opioid intracellular receptor 1 (223 aa).

Topologically, residues 1–9 are lumenal; the sequence is MPWAAGRRW. Residues 2 to 8 are targeting to endoplasmic reticulum-associated lipid droplets; the sequence is PWAAGRR. The chain crosses the membrane as a helical span at residues 10–30; it reads AWITLILTIIAVLIQAAWLWL. Residues 31-223 are Cytoplasmic-facing; sequence GTQNFVFSRE…LTTYLFGQDS (193 aa). Residues 99-106 are important for ligand-binding; sequence SLSEYVLL. A C-terminal hydrophobic region region spans residues 177–223; sequence VIPSTLFFALADTFFSTQDYLTLFYTLRAYARGLRLELTTYLFGQDS.

The protein belongs to the ERG2 family. Homotrimer. Interacts with KCNA4. Interacts with KCNA2; cocaine consumption leads to increased interaction. Forms a ternary complex with ANK2 and ITPR3. The complex is disrupted by agonists. Interacts with RNF112 in an oxidative stress-regulated manner. Widely expressed with higher expression in liver, brain, kidney and thymus. Expressed throughout the brain with higher expression within cerebral cortex, hippocampus and cerebellum. Within the hippocampus expressed in cornu ammonis pyramidal neurons, the granular cells of the dentate gyrus as well as interneurons. Within the cerebellum, expressed in Purkinje cell bodies. Highly expressed in the brainstem and motor neurons of the spinal cord. Expressed by neural retina, retinal pigment epithelial cells and lens.

It localises to the nucleus inner membrane. The protein localises to the nucleus outer membrane. The protein resides in the nucleus envelope. It is found in the cytoplasmic vesicle. Its subcellular location is the endoplasmic reticulum membrane. It localises to the membrane. The protein localises to the lipid droplet. The protein resides in the cell junction. It is found in the cell membrane. Its subcellular location is the cell projection. It localises to the growth cone. The protein localises to the postsynaptic density membrane. Functions in lipid transport from the endoplasmic reticulum and is involved in a wide array of cellular functions probably through regulation of the biogenesis of lipid microdomains at the plasma membrane. Involved in the regulation of different receptors it plays a role in BDNF signaling and EGF signaling. Also regulates ion channels like the potassium channel and could modulate neurotransmitter release. Plays a role in calcium signaling through modulation together with ANK2 of the ITP3R-dependent calcium efflux at the endoplasmic reticulum. Plays a role in several other cell functions including proliferation, survival and death. Originally identified for its ability to bind various psychoactive drugs it is involved in learning processes, memory and mood alteration. Necessary for proper mitochondrial axonal transport in motor neurons, in particular the retrograde movement of mitochondria. Plays a role in protecting cells against oxidative stress-induced cell death via its interaction with RNF112. The polypeptide is Sigma non-opioid intracellular receptor 1 (Sigmar1) (Mus musculus (Mouse)).